The following is a 292-amino-acid chain: MEQLKAFDNEVNAFLDNMFGPRDSRVRGWFLLDSYLPTFILTITYLLSIWLGNKYMKNRPALSLRGILTLYNLAITLLSAYMLVELILSSWEGGYNLQCQNLDSAGEGDVRVAKVLWWYYFSKLVEFLDTIFFVLRKKTNQITFLHVYHHASMFNIWWCVLNWIPCGQSFFGPTLNSFIHILMYSYYGLSVFPSMHKYLWWKKYLTQAQLVQFVLTITHTLSAVVKPCGFPFGCLIFQSSYMMTLVILFLNFYIQTYRKKPVKKELQEKEVKNGFPKAHLIVANGMTDKKAQ.

Helical transmembrane passes span 29 to 49 (WFLL…LLSI), 67 to 87 (ILTL…VELI), 115 to 135 (VLWW…FFVL), 153 to 173 (MFNI…FFGP), 175 to 195 (LNSF…FPSM), 205 to 225 (LTQA…SAVV), and 230 to 250 (FPFG…ILFL). Residues 289-292 (KKAQ) carry the Di-lysine motif motif.

This sequence belongs to the ELO family. ELOVL2 subfamily. As to quaternary structure, interacts with TECR. In terms of tissue distribution, highly expressed in testis, lower level in liver. Weakly expressed in white adipose tissue, brain and kidney.

It is found in the endoplasmic reticulum membrane. It carries out the reaction a very-long-chain acyl-CoA + malonyl-CoA + H(+) = a very-long-chain 3-oxoacyl-CoA + CO2 + CoA. The enzyme catalyses (5Z,8Z,11Z,14Z)-eicosatetraenoyl-CoA + malonyl-CoA + H(+) = (7Z,10Z,13Z,16Z)-3-oxodocosatetraenoyl-CoA + CO2 + CoA. The catalysed reaction is (7Z,10Z,13Z,16Z)-docosatetraenoyl-CoA + malonyl-CoA + H(+) = (9Z,12Z,15Z,18Z)-3-oxotetracosatetraenoyl-CoA + CO2 + CoA. It catalyses the reaction (5Z,8Z,11Z,14Z,17Z)-eicosapentaenoyl-CoA + malonyl-CoA + H(+) = 3-oxo-(7Z,10Z,13Z,16Z,19Z)-docosapentaenoyl-CoA + CO2 + CoA. It carries out the reaction (7Z,10Z,13Z,16Z,19Z)-docosapentaenoyl-CoA + malonyl-CoA + H(+) = (9Z,12Z,15Z,18Z,21Z)-3-oxotetracosapentaenoyl-CoA + CO2 + CoA. The protein operates within lipid metabolism; polyunsaturated fatty acid biosynthesis. Catalyzes the first and rate-limiting reaction of the four reactions that constitute the long-chain fatty acids elongation cycle. This endoplasmic reticulum-bound enzymatic process allows the addition of 2 carbons to the chain of long- and very long-chain fatty acids (VLCFAs) per cycle. Condensing enzyme that catalyzes the synthesis of polyunsaturated very long chain fatty acid (C20- and C22-PUFA), acting specifically toward polyunsaturated acyl-CoA with the higher activity toward C20:4(n-6) acyl-CoA. May participate in the production of polyunsaturated VLCFAs of different chain lengths that are involved in multiple biological processes as precursors of membrane lipids and lipid mediators. Essential for the formation of C24:5(n-6) up to C30:5(n-6) PUFAs in testis, these fatty acids being indispensable for normal spermatogenesis and fertility. The polypeptide is Very long chain fatty acid elongase 2 (Mus musculus (Mouse)).